The primary structure comprises 132 residues: Ribonuclease P protein component 4 (132 aa).

Zn(2+) is bound by residues C67, C70, C96, and C99.

Belongs to the eukaryotic/archaeal RNase P protein component 4 family. In terms of assembly, consists of a catalytic RNA component and at least 4-5 protein subunits. Zn(2+) is required as a cofactor.

Its subcellular location is the cytoplasm. The enzyme catalyses Endonucleolytic cleavage of RNA, removing 5'-extranucleotides from tRNA precursor.. Functionally, part of ribonuclease P, a protein complex that generates mature tRNA molecules by cleaving their 5'-ends. In Thermococcus kodakarensis (strain ATCC BAA-918 / JCM 12380 / KOD1) (Pyrococcus kodakaraensis (strain KOD1)), this protein is Ribonuclease P protein component 4.